A 265-amino-acid polypeptide reads, in one-letter code: Silencing boundary-establishment protein FUB1-like protein (265 aa).

Residues His-194 to Met-265 form a disordered region.

The protein belongs to the proteasome inhibitor PI31 family. As to quaternary structure, interacts with the 20S proteasome.

It localises to the cytoplasm. It is found in the nucleus. Its function is as follows. May play a role in the establishment of transcriptional silencing boundaries, preventing the propagation of heterochromatic silencing. In Schizosaccharomyces pombe (strain 972 / ATCC 24843) (Fission yeast), this protein is Silencing boundary-establishment protein FUB1-like protein.